The sequence spans 130 residues: Small ribosomal subunit protein uS8 (130 aa).

Belongs to the universal ribosomal protein uS8 family. As to quaternary structure, part of the 30S ribosomal subunit. Contacts proteins S5 and S12.

Functionally, one of the primary rRNA binding proteins, it binds directly to 16S rRNA central domain where it helps coordinate assembly of the platform of the 30S subunit. The polypeptide is Small ribosomal subunit protein uS8 (Pseudomonas fluorescens (strain ATCC BAA-477 / NRRL B-23932 / Pf-5)).